A 220-amino-acid chain; its full sequence is Claudin-3 (220 aa).

Residues 1–8 (MSMGLEIT) are Cytoplasmic-facing. A helical transmembrane segment spans residues 9-29 (GTALAVLGWLGTIVCCALPMW). At 30-80 (RVSAFIGSNIITSQNIWEGLWMNCVVQSTGQMQCKVYDSLLALPQDLQAAR) the chain is on the extracellular side. A helical membrane pass occupies residues 81 to 101 (ALIVVAILLAAFGLLVALVGA). The Cytoplasmic segment spans residues 102–115 (QCTNCVQDDTAKAK). A helical transmembrane segment spans residues 116-136 (ITIVAGVLFLLAALLTLVPVS). Topologically, residues 137–159 (WSANTIIRDFYNPVVPEAQKREM) are extracellular. Residues 160–180 (GAGLYVGWAAAALQLLGGALL) traverse the membrane as a helical segment. Over 181-220 (CCSCPPREKKYTATKVVYSAPRSTGPGASLGTGYDRKDYV) the chain is Cytoplasmic. A Phosphotyrosine modification is found at Tyr-198. Residues Ser-199 and Ser-209 each carry the phosphoserine modification. Residues 219 to 220 (YV) form an interactions with TJP1, TJP2 and TJP3 region.

It belongs to the claudin family. Can form homo- and heteropolymers with other CLDN. Homopolymers interact with CLDN1 and CLDN2 homopolymers. Interacts in cis (within the same plasma membrane) with CLDN19. Directly interacts with TJP1/ZO-1, TJP2/ZO-2 and TJP3/ZO-3.

Its subcellular location is the cell junction. The protein localises to the tight junction. The protein resides in the cell membrane. Barrier-forming claudin. Plays a major role in tight junction-specific obliteration of the intercellular space, through calcium-independent cell-adhesion activity. This is Claudin-3 (CLDN3) from Homo sapiens (Human).